The following is a 97-amino-acid chain: Mapk-regulated corepressor-interacting protein 1 (97 aa).

2 disordered regions span residues 1–29 (MTSSPVSRVVYNGKRPASNTRSPSSNEIF) and 72–97 (SNSLKSFKPIDLNDLKRRTVQDPKKS). Residues 17–28 (ASNTRSPSSNEI) show a composition bias toward polar residues. Residues 82 to 97 (DLNDLKRRTVQDPKKS) show a composition bias toward basic and acidic residues.

This sequence belongs to the MCRIP family.

It is found in the nucleus. The protein resides in the cytoplasm. It localises to the stress granule. Its function is as follows. May play a role in the regulation of the epithelial-mesenchymal transition. This is Mapk-regulated corepressor-interacting protein 1 (Mcrip1) from Xenopus tropicalis (Western clawed frog).